The chain runs to 239 residues: Ribosomal RNA small subunit methyltransferase G (239 aa).

S-adenosyl-L-methionine-binding positions include G78, F83, 129–130 (AE), and R148.

This sequence belongs to the methyltransferase superfamily. RNA methyltransferase RsmG family.

It is found in the cytoplasm. Its function is as follows. Specifically methylates the N7 position of a guanine in 16S rRNA. The chain is Ribosomal RNA small subunit methyltransferase G from Clostridium botulinum (strain Okra / Type B1).